Consider the following 66-residue polypeptide: Ocellatin-PT3 (66 aa).

Positions 1-22 (MAFLKKSLFLVLFLGLVSLSIC) are cleaved as a signal peptide. Positions 23-39 (DEEKRQDEDDDDDDDEE) are excised as a propeptide. A Valine amide modification is found at Val-66.

As to expression, expressed by the skin glands.

The protein localises to the secreted. Functionally, has antibacterial activity against Gram-negative bacterium E.coli ATCC 25922 (MIC=320 uM) but not against S.pneumoniae ATCC 700603, S.choleraesuis ATCC 14028 or Gram-positive bacterium S.aureus ATCC 29313. Shows no hemolytic activity and no cytotoxicity. This chain is Ocellatin-PT3, found in Leptodactylus pustulatus (Ceara white-lipped frog).